Reading from the N-terminus, the 256-residue chain is Enolase-phosphatase E1 (256 aa).

Mg(2+) contacts are provided by D14 and E16. Substrate is bound by residues 142–143 (SS) and K176. D201 contacts Mg(2+).

The protein belongs to the HAD-like hydrolase superfamily. MasA/MtnC family. As to quaternary structure, monomer. Mg(2+) is required as a cofactor.

It is found in the cytoplasm. The protein localises to the nucleus. It carries out the reaction 5-methylsulfanyl-2,3-dioxopentyl phosphate + H2O = 1,2-dihydroxy-5-(methylsulfanyl)pent-1-en-3-one + phosphate. The protein operates within amino-acid biosynthesis; L-methionine biosynthesis via salvage pathway; L-methionine from S-methyl-5-thio-alpha-D-ribose 1-phosphate: step 3/6. It participates in amino-acid biosynthesis; L-methionine biosynthesis via salvage pathway; L-methionine from S-methyl-5-thio-alpha-D-ribose 1-phosphate: step 4/6. Bifunctional enzyme that catalyzes the enolization of 2,3-diketo-5-methylthiopentyl-1-phosphate (DK-MTP-1-P) into the intermediate 2-hydroxy-3-keto-5-methylthiopentenyl-1-phosphate (HK-MTPenyl-1-P), which is then dephosphorylated to form the acireductone 1,2-dihydroxy-3-keto-5-methylthiopentene (DHK-MTPene). The protein is Enolase-phosphatase E1 of Drosophila simulans (Fruit fly).